The primary structure comprises 207 residues: Thiamine-phosphate synthase (207 aa).

4-amino-2-methyl-5-(diphosphooxymethyl)pyrimidine contacts are provided by residues glutamine 37–lysine 41 and asparagine 69. Positions 70 and 89 each coordinate Mg(2+). Serine 108 lines the 4-amino-2-methyl-5-(diphosphooxymethyl)pyrimidine pocket. Threonine 134–serine 136 contributes to the 2-[(2R,5Z)-2-carboxy-4-methylthiazol-5(2H)-ylidene]ethyl phosphate binding site. Lysine 137 is a 4-amino-2-methyl-5-(diphosphooxymethyl)pyrimidine binding site. 2-[(2R,5Z)-2-carboxy-4-methylthiazol-5(2H)-ylidene]ethyl phosphate contacts are provided by residues glycine 165 and isoleucine 185–serine 186.

This sequence belongs to the thiamine-phosphate synthase family. Requires Mg(2+) as cofactor.

The enzyme catalyses 2-[(2R,5Z)-2-carboxy-4-methylthiazol-5(2H)-ylidene]ethyl phosphate + 4-amino-2-methyl-5-(diphosphooxymethyl)pyrimidine + 2 H(+) = thiamine phosphate + CO2 + diphosphate. It carries out the reaction 2-(2-carboxy-4-methylthiazol-5-yl)ethyl phosphate + 4-amino-2-methyl-5-(diphosphooxymethyl)pyrimidine + 2 H(+) = thiamine phosphate + CO2 + diphosphate. The catalysed reaction is 4-methyl-5-(2-phosphooxyethyl)-thiazole + 4-amino-2-methyl-5-(diphosphooxymethyl)pyrimidine + H(+) = thiamine phosphate + diphosphate. Its pathway is cofactor biosynthesis; thiamine diphosphate biosynthesis; thiamine phosphate from 4-amino-2-methyl-5-diphosphomethylpyrimidine and 4-methyl-5-(2-phosphoethyl)-thiazole: step 1/1. Its function is as follows. Condenses 4-methyl-5-(beta-hydroxyethyl)thiazole monophosphate (THZ-P) and 2-methyl-4-amino-5-hydroxymethyl pyrimidine pyrophosphate (HMP-PP) to form thiamine monophosphate (TMP). In Desulfitobacterium hafniense (strain Y51), this protein is Thiamine-phosphate synthase.